A 205-amino-acid polypeptide reads, in one-letter code: Probable thymidylate kinase (205 aa).

7 to 14 (GIDGAGKS) is a binding site for ATP.

The protein belongs to the thymidylate kinase family.

The catalysed reaction is dTMP + ATP = dTDP + ADP. This chain is Probable thymidylate kinase, found in Thermococcus kodakarensis (strain ATCC BAA-918 / JCM 12380 / KOD1) (Pyrococcus kodakaraensis (strain KOD1)).